We begin with the raw amino-acid sequence, 699 residues long: Endogenous retrovirus group K member 19 Env polyprotein (699 aa).

Residues 1-47 (MNPSEMQRKAPPRRRRHRNRAPLTHKMNKMVTSEEQMKLPSTKKAEP) are disordered. Positions 1–89 (MNPSEMQRKA…ALMIVSMVVS (89 aa)) are cleaved as a signal peptide. Residues 10–20 (APPRRRRHRNR) are compositionally biased toward basic residues. The Extracellular segment spans residues 90 to 632 (LPMPAGAAAA…NLNPVTWVKT (543 aa)). N-linked (GlcNAc...) asparagine glycans are attached at residues N100, N128, N153, N274, N355, N372, and N461. The segment at 466-486 (FIFTLIAVIMGLIAVTATAAV) is fusion peptide. Residues N507, N554, N566, and N585 are each glycosylated (N-linked (GlcNAc...) asparagine). A helical transmembrane segment spans residues 633-653 (IGSTTIINLILILVCLFCLLL). Residues 654 to 699 (VCRCTQQLRRDSDHRERAMMTMAVLSKRKGGNVGKSKRDQIVTVSV) are Cytoplasmic-facing.

Belongs to the beta type-B retroviral envelope protein family. HERV class-II K(HML-2) env subfamily. The surface (SU) and transmembrane (TM) proteins form a heterodimer. SU and TM are attached by noncovalent interactions or by a labile interchain disulfide bond. Specific enzymatic cleavages in vivo yield the mature SU and TM proteins.

The protein localises to the cell membrane. Its subcellular location is the virion. Functionally, retroviral envelope proteins mediate receptor recognition and membrane fusion during early infection. Endogenous envelope proteins may have kept, lost or modified their original function during evolution. This endogenous envelope protein has lost its original fusogenic properties. In terms of biological role, SU mediates receptor recognition. TM anchors the envelope heterodimer to the viral membrane through one transmembrane domain. The other hydrophobic domain, called fusion peptide, mediates fusion of the viral membrane with the target cell membrane. The sequence is that of Endogenous retrovirus group K member 19 Env polyprotein (ERVK-19) from Homo sapiens (Human).